Here is a 128-residue protein sequence, read N- to C-terminus: Diacylglycerol kinase (128 aa).

Residue glutamate 34 participates in a divalent metal cation binding. 2 consecutive transmembrane segments (helical) span residues 35–55 (SAFRQIVILALFCIVLASYLA) and 58–78 (FLEWGLLILPCFLSVVVELIN). Residue glutamate 75 is the Proton acceptor of the active site. Glutamate 82 is a binding site for a divalent metal cation. The chain crosses the membrane as a helical span at residues 107–127 (QLIGLIFWTLIWGRYLLALYL).

The protein belongs to the bacterial diacylglycerol kinase family. The cofactor is Mg(2+).

The protein localises to the cell inner membrane. It catalyses the reaction a 1,2-diacyl-sn-glycerol + ATP = a 1,2-diacyl-sn-glycero-3-phosphate + ADP + H(+). In terms of biological role, catalyzes the ATP-dependent phosphorylation of sn-l,2-diacylglycerol (DAG) to phosphatidic acid. Involved in the recycling of diacylglycerol produced as a by-product during membrane-derived oligosaccharide (MDO) biosynthesis. In Helicobacter pylori (strain ATCC 700392 / 26695) (Campylobacter pylori), this protein is Diacylglycerol kinase (dgkA).